Consider the following 97-residue polypeptide: U6-theraphotoxin-Hhn1a 4 (97 aa).

A signal peptide spans 1–33; that stretch reads MLIKQFSRRSKNMKVQILLAFAALFVLAVGSYA. The propeptide occupies 34 to 61; that stretch reads SESKKLDLRDALLSAMFSADYQLNPQER. 3 disulfide bridges follow: C63/C77, C70/C82, and C76/C89.

The protein belongs to the neurotoxin 10 (Hwtx-1) family. 12 (Hntx-12) subfamily. Expressed by the venom gland.

The protein localises to the secreted. In terms of biological role, ion channel inhibitor. In Cyriopagopus hainanus (Chinese bird spider), this protein is U6-theraphotoxin-Hhn1a 4.